Consider the following 138-residue polypeptide: ATP synthase epsilon chain (138 aa).

Belongs to the ATPase epsilon chain family. F-type ATPases have 2 components, CF(1) - the catalytic core - and CF(0) - the membrane proton channel. CF(1) has five subunits: alpha(3), beta(3), gamma(1), delta(1), epsilon(1). CF(0) has three main subunits: a, b and c.

The protein localises to the cell inner membrane. Functionally, produces ATP from ADP in the presence of a proton gradient across the membrane. This is ATP synthase epsilon chain from Geobacter metallireducens (strain ATCC 53774 / DSM 7210 / GS-15).